The primary structure comprises 843 residues: Protein P (843 aa).

The segment at 1-177 (MPLSYQHFRK…FCGSPYSWEQ (177 aa)) is terminal protein domain (TP). Residues 178-346 (DLQHGRLVFQ…YCLCHIVNLI (169 aa)) form a spacer region. The segment at 220 to 265 (QSRLGPQPAQGQLAGRQQGGSGSIRARVHPSPWGTVGVEPSGSGPT) is disordered. Positions 223–235 (LGPQPAQGQLAGR) are enriched in low complexity. The polymerase/reverse transcriptase domain (RT) stretch occupies residues 347 to 690 (EDWGPCTEHG…YLNLYPVARQ (344 aa)). The Reverse transcriptase domain occupies 357–600 (EHLIRTPRTP…YSLNFMGYVI (244 aa)). The Mg(2+) site is built by Asp429, Asp551, and Asp552.

It belongs to the hepadnaviridae P protein family.

The catalysed reaction is DNA(n) + a 2'-deoxyribonucleoside 5'-triphosphate = DNA(n+1) + diphosphate. The enzyme catalyses Endonucleolytic cleavage to 5'-phosphomonoester.. Activated by host HSP70 and HSP40 in vitro to be able to bind the epsilon loop of the pgRNA. Because deletion of the RNase H region renders the protein partly chaperone-independent, the chaperones may be needed indirectly to relieve occlusion of the RNA-binding site by this domain. Inhibited by several reverse-transcriptase inhibitors: Lamivudine, Adefovir and Entecavir. In terms of biological role, multifunctional enzyme that converts the viral RNA genome into dsDNA in viral cytoplasmic capsids. This enzyme displays a DNA polymerase activity that can copy either DNA or RNA templates, and a ribonuclease H (RNase H) activity that cleaves the RNA strand of RNA-DNA heteroduplexes in a partially processive 3'- to 5'-endonucleasic mode. Neo-synthesized pregenomic RNA (pgRNA) are encapsidated together with the P protein, and reverse-transcribed inside the nucleocapsid. Initiation of reverse-transcription occurs first by binding the epsilon loop on the pgRNA genome, and is initiated by protein priming, thereby the 5'-end of (-)DNA is covalently linked to P protein. Partial (+)DNA is synthesized from the (-)DNA template and generates the relaxed circular DNA (RC-DNA) genome. After budding and infection, the RC-DNA migrates in the nucleus, and is converted into a plasmid-like covalently closed circular DNA (cccDNA). The activity of P protein does not seem to be necessary for cccDNA generation, and is presumably released from (+)DNA by host nuclear DNA repair machinery. This Hepatitis B virus genotype B2 (isolate Vietnam/9873/1997) (HBV-B) protein is Protein P.